The chain runs to 310 residues: Zinc finger CCCH domain-containing protein 14 (310 aa).

The interval 56-75 (ESLSPSPPSSSSPPSRVDTT) is disordered. Residues 84 to 129 (KLILEYDELNEHYELCLNRLQSLMTELDSLRHENDSLRFENSDLLK) are a coiled coil. Residues 155–167 (QISDSRSAKRNNQ) show a composition bias toward basic and acidic residues. The segment at 155-174 (QISDSRSAKRNNQERNSLPK) is disordered. 2 C3H1-type zinc fingers span residues 232–260 (MMKT…HGID) and 270–298 (RYKT…HSLT).

Highly expressed in secondary cell wall-forming tissues and the xylem cells of roots. Expressed predominantly in inflorescence stems, flowers and siliques. Highly expressed in the basal portion of stems, where cells are undergoing secondary cell wall thickening.

In terms of biological role, functions probably as a transcriptional factor that activates genes involved in secondary cell wall biosynthesis. May play a role in both transcriptional and post-transcriptional regulation. Binds to ssDNA, dsDNA, and ribohomopolymers in vitro. Maybe involved in post-transcriptional regulation of its target genes. Targets RNA of a polygalacturonase, a well-known cell wall modifying gene. Functions redudantly with C3H15 to regulate secondary cell wall formation. C3H14 and C3H15 have overlapping roles in the regulation of secondary cell wall formation and anther development. C3H14 may contribute more to secondary cell wall thickening while C3H15 could be more important in anther development. May regulate at both the transcriptional and post-transcriptional levels the expression of many genes involved in various biological processes, particularly those associated with cell wall metabolism and pollen development. The sequence is that of Zinc finger CCCH domain-containing protein 14 from Arabidopsis thaliana (Mouse-ear cress).